The sequence spans 733 residues: MKTALVLILATATLAVAYPSSTQDYRVVADKTFLTRQRDFLRLLVRIEQPNYYADQYEVGNAYDIEANINNYKYPHVVKNFLSAYKRGMLPRGVPYSPYYTTQSYETKLLFDLFYYANDYDTFYKTVCWARDRINEGQFLYAFSTAVFQREDLSDYILPPPYEIYPYLFVDSEVIQKAYETRMSDVHLTAPKTYIFPVNYTVANPEQELYYWYEDVGLNTYYAYYYFNYPTFFNETEYGVHFDRRGELFYYTRQQLYARQFLERHSHDLGEVEPVHYDRPFQTEYYPRLRYSNGQEVPPRPYEYSRRSLYYSNGNSYYYGNYYGGNNNYYTGNYYTGNYHPSYYYGYSTEHDYYYPEDLQIYDRRVLDSIDYGYVFSYPDHKYPLYEDYTKGIDYLGDVIEGNGDTVNRRYYGSIYHFYRQLAGKNVDPYNDSGFAPSALQNIYTALRDPANFHILKHINSYFQRYKGYLPRYTYDELVFPGVKIENVDVGKLVTYFDYFDVDIDNVVNVKVAEDGKYVDYRARQTRLNHKPFTYNIEVNSEQATDVYVRVFLGPKYDYLGREYDLNDRRHYFVELDRFPYKVQAGKTTITRNSRESSVVSHDYPSFRTLLRKVFDAYEGKEQFYYDKSERYCGYPERLLLPKGKTGGQTYTFYVMVTPYVKQDDHDFEPYNYKSFSYCGVGANHKFPDDKPFGYPFDRVLYSQEFVTPNMYFKDVVIYHKKYEEINAATVQQ.

The first 17 residues, 1-17, serve as a signal peptide directing secretion; it reads MKTALVLILATATLAVA. N-linked (GlcNAc...) asparagine glycans are attached at residues N199, N234, and N431.

It belongs to the hemocyanin family. Homohexamer.

The protein resides in the secreted. Its subcellular location is the extracellular space. Functionally, larval storage protein (LSP) which may serve as a store of amino acids for synthesis of adult proteins. This is Hexamerin from Blaberus discoidalis (Tropical cockroach).